Consider the following 59-residue polypeptide: Large ribosomal subunit protein bL32 (59 aa).

The segment covering 1–15 (MAVPKRKTSKSKRDM) has biased composition (basic residues). Positions 1–21 (MAVPKRKTSKSKRDMRRASNS) are disordered.

It belongs to the bacterial ribosomal protein bL32 family.

This is Large ribosomal subunit protein bL32 from Alkaliphilus metalliredigens (strain QYMF).